The following is a 335-amino-acid chain: Delta(7)-sterol 5(6)-desaturase erg3B (335 aa).

3 helical membrane-spanning segments follow: residues 74–94 (IWAF…ALVF), 113–133 (IGQA…LFLA), and 152–172 (LYTY…IYWI). Residues 160 to 284 (LFIAFTDFAI…FITFWDRIGG (125 aa)) form the Fatty acid hydroxylase domain. Residues 173 to 177 (HRGLH) carry the Histidine box-1 motif. A Histidine box-2 motif is present at residues 186–190 (HKPHH). Residues 219–239 (PFLFPLQKAAYLGLFVFVTIW) traverse the membrane as a helical segment. A glycan (N-linked (GlcNAc...) asparagine) is linked at Asn-256. A Histidine box-3 motif is present at residues 261-265 (HTIHH).

Belongs to the sterol desaturase family. Fe cation serves as cofactor.

It localises to the endoplasmic reticulum membrane. Its pathway is steroid metabolism; ergosterol biosynthesis. Delta(7)-sterol 5(6)-desaturase; part of the third module of ergosterol biosynthesis pathway that includes the late steps of the pathway. Erg3B catalyzes the introduction of a C-5 double bond in the B ring to produce 5-dehydroepisterol. The third module or late pathway involves the ergosterol synthesis itself through consecutive reactions that mainly occur in the endoplasmic reticulum (ER) membrane. Firstly, the squalene synthase erg9 catalyzes the condensation of 2 farnesyl pyrophosphate moieties to form squalene, which is the precursor of all steroids. Squalene synthase is crucial for balancing the incorporation of farnesyl diphosphate (FPP) into sterol and nonsterol isoprene synthesis. Secondly, squalene is converted into lanosterol by the consecutive action of the squalene epoxidase erg1 and the lanosterol synthase erg7. Then, the delta(24)-sterol C-methyltransferase erg6 methylates lanosterol at C-24 to produce eburicol. Eburicol is the substrate of the sterol 14-alpha demethylase encoded by cyp51A and cyp51B, to yield 4,4,24-trimethyl ergosta-8,14,24(28)-trienol. The C-14 reductase erg24 then reduces the C14=C15 double bond which leads to 4,4-dimethylfecosterol. A sequence of further demethylations at C-4, involving the C-4 demethylation complex containing the C-4 methylsterol oxidases erg25A or erg25B, the sterol-4-alpha-carboxylate 3-dehydrogenase erg26 and the 3-keto-steroid reductase erg27, leads to the production of fecosterol via 4-methylfecosterol. The C-8 sterol isomerase erg2 then catalyzes the reaction which results in unsaturation at C-7 in the B ring of sterols and thus converts fecosterol to episterol. The sterol-C5-desaturase erg3B then catalyzes the introduction of a C-5 double bond in the B ring to produce 5-dehydroepisterol. The 2 other sterol-C5-desaturases, erg3A and erg3C, seem to be less important in ergosterol biosynthesis. The C-22 sterol desaturase erg5 further converts 5-dehydroepisterol into ergosta-5,7,22,24(28)-tetraen-3beta-ol by forming the C-22(23) double bond in the sterol side chain. Finally, ergosta-5,7,22,24(28)-tetraen-3beta-ol is substrate of the C-24(28) sterol reductases erg4A and erg4B to produce ergosterol. Possible alternative sterol biosynthetic pathways might exist from fecosterol to ergosterol, depending on the activities of the erg3 isoforms. This chain is Delta(7)-sterol 5(6)-desaturase erg3B, found in Aspergillus fumigatus (strain ATCC MYA-4609 / CBS 101355 / FGSC A1100 / Af293) (Neosartorya fumigata).